Consider the following 222-residue polypeptide: Deoxyribose-phosphate aldolase (222 aa).

D89 functions as the Proton donor/acceptor in the catalytic mechanism. Residue K152 is the Schiff-base intermediate with acetaldehyde of the active site. K181 acts as the Proton donor/acceptor in catalysis.

The protein belongs to the DeoC/FbaB aldolase family. DeoC type 1 subfamily.

It localises to the cytoplasm. The catalysed reaction is 2-deoxy-D-ribose 5-phosphate = D-glyceraldehyde 3-phosphate + acetaldehyde. The protein operates within carbohydrate degradation; 2-deoxy-D-ribose 1-phosphate degradation; D-glyceraldehyde 3-phosphate and acetaldehyde from 2-deoxy-alpha-D-ribose 1-phosphate: step 2/2. Functionally, catalyzes a reversible aldol reaction between acetaldehyde and D-glyceraldehyde 3-phosphate to generate 2-deoxy-D-ribose 5-phosphate. The protein is Deoxyribose-phosphate aldolase of Alkaliphilus oremlandii (strain OhILAs) (Clostridium oremlandii (strain OhILAs)).